The following is a 256-amino-acid chain: 3-dehydroquinate dehydratase (256 aa).

3-dehydroquinate-binding positions include Glu46–Arg48 and Arg82. His144 acts as the Proton donor/acceptor in catalysis. The active-site Schiff-base intermediate with substrate is the Lys171. Residues Arg213, Ser232, and Gln236 each coordinate 3-dehydroquinate.

It belongs to the type-I 3-dehydroquinase family. As to quaternary structure, homodimer.

The catalysed reaction is 3-dehydroquinate = 3-dehydroshikimate + H2O. It participates in metabolic intermediate biosynthesis; chorismate biosynthesis; chorismate from D-erythrose 4-phosphate and phosphoenolpyruvate: step 3/7. Its function is as follows. Involved in the third step of the chorismate pathway, which leads to the biosynthesis of aromatic amino acids. Catalyzes the cis-dehydration of 3-dehydroquinate (DHQ) and introduces the first double bond of the aromatic ring to yield 3-dehydroshikimate. This Shouchella clausii (strain KSM-K16) (Alkalihalobacillus clausii) protein is 3-dehydroquinate dehydratase.